The chain runs to 183 residues: MRILGIDPGLRVTGFGVIDVSGHRLAYVASGVIRTPTADLATRLGTIFQGVSTLVREHAPDQAAIEQVFVNVNPQSTLLLGQARGAAICGLVSGGLPVAEYTALQLKQAVVGYGRATKSQMQEMVTRLLNLTGQPGSDAADALGMAICHAHSGSTLGTIGAIGGLAPALAKKGLRVRRGRLVG.

Catalysis depends on residues Asp7, Glu66, and Asp138. Mg(2+) is bound by residues Asp7, Glu66, and Asp138.

It belongs to the RuvC family. In terms of assembly, homodimer which binds Holliday junction (HJ) DNA. The HJ becomes 2-fold symmetrical on binding to RuvC with unstacked arms; it has a different conformation from HJ DNA in complex with RuvA. In the full resolvosome a probable DNA-RuvA(4)-RuvB(12)-RuvC(2) complex forms which resolves the HJ. Mg(2+) is required as a cofactor.

The protein localises to the cytoplasm. It catalyses the reaction Endonucleolytic cleavage at a junction such as a reciprocal single-stranded crossover between two homologous DNA duplexes (Holliday junction).. In terms of biological role, the RuvA-RuvB-RuvC complex processes Holliday junction (HJ) DNA during genetic recombination and DNA repair. Endonuclease that resolves HJ intermediates. Cleaves cruciform DNA by making single-stranded nicks across the HJ at symmetrical positions within the homologous arms, yielding a 5'-phosphate and a 3'-hydroxyl group; requires a central core of homology in the junction. The consensus cleavage sequence is 5'-(A/T)TT(C/G)-3'. Cleavage occurs on the 3'-side of the TT dinucleotide at the point of strand exchange. HJ branch migration catalyzed by RuvA-RuvB allows RuvC to scan DNA until it finds its consensus sequence, where it cleaves and resolves the cruciform DNA. In Burkholderia ambifaria (strain ATCC BAA-244 / DSM 16087 / CCUG 44356 / LMG 19182 / AMMD) (Burkholderia cepacia (strain AMMD)), this protein is Crossover junction endodeoxyribonuclease RuvC.